The following is a 993-amino-acid chain: Type II inositol 1,4,5-trisphosphate 5-phosphatase (993 aa).

The region spanning 22–148 (QGVLCKGDSR…PEFEWLSRHT (127 aa)) is the PH domain. 2 stretches are compositionally biased toward basic and acidic residues: residues 149 to 163 (CAEP…REWN) and 294 to 303 (SKSDMSEKVR). Disordered stretches follow at residues 149-191 (CAEP…GLED) and 236-304 (EALE…KVRS). Residues 342 to 668 (IQNFRFFVGT…LDKMENANIP (327 aa)) are 5-phosphatase. Positions 355 and 383 each coordinate Mg(2+). Residues E383, 459–460 (NK), 582–583 (YK), and 596–598 (KCR) each bind substrate. An ASH region spans residues 669 to 782 (SVTLSKREFC…LSVSGNYLPS (114 aa)). Residues 821-993 (SQLENPMEIP…FIHQFLCGPL (173 aa)) enclose the Rho-GAP domain. Position 990 is a cysteine methyl ester (C990). The S-farnesyl cysteine moiety is linked to residue C990. Positions 991-993 (GPL) are cleaved as a propeptide — removed in mature form.

This sequence belongs to the inositol 1,4,5-trisphosphate 5-phosphatase type II family. As to quaternary structure, interacts with APPL1, PHETA1 and PHETA2. Interacts with several Rab GTPases, at least RAB1A, RAB2A, RAB5A, RAB6A, RAB8A, RAB9A and RAB33B; these interactions may play a dual role in targeting INPP5B to the specific membranes and stimulating its phosphatase activity. Interacts preferentially with non-phosphorylated RAB8A; phosphorylation of RAB8A on 'Thr-72' disrupts this interaction. Interacts with INPP5F. In terms of processing, isoprenylation at Cys-990 may be required for localization at the membrane. May be proteolytically cleaved after Lys-320 as inferred from N-terminal protein sequence of the 75 kda form. Detected in kidney, liver, brain, lung and testis (at protein level). Detected in kidney and liver, and at lower levels in brain, lung and testis.

It is found in the cytoplasm. It localises to the cytosol. The protein resides in the endoplasmic reticulum-Golgi intermediate compartment. The protein localises to the early endosome membrane. Its subcellular location is the membrane. It is found in the cytoplasmic vesicle. It localises to the phagosome membrane. The enzyme catalyses a 1,2-diacyl-sn-glycero-3-phospho-(1D-myo-inositol-4,5-bisphosphate) + H2O = a 1,2-diacyl-sn-glycero-3-phospho-(1D-myo-inositol 4-phosphate) + phosphate. Hydrolyzes phosphatidylinositol 4,5-bisphosphate (PtIns(4,5)P2) and the signaling molecule phosphatidylinositol 1,4,5-trisphosphate (PtIns(1,4,5)P3), and thereby modulates cellular signaling events. The protein is Type II inositol 1,4,5-trisphosphate 5-phosphatase (Inpp5b) of Mus musculus (Mouse).